A 133-amino-acid chain; its full sequence is Small ribosomal subunit protein uS11 (133 aa).

This sequence belongs to the universal ribosomal protein uS11 family. In terms of assembly, part of the 30S ribosomal subunit. Interacts with proteins S7 and S18. Binds to IF-3.

Functionally, located on the platform of the 30S subunit, it bridges several disparate RNA helices of the 16S rRNA. Forms part of the Shine-Dalgarno cleft in the 70S ribosome. In Ralstonia pickettii (strain 12J), this protein is Small ribosomal subunit protein uS11.